The following is a 408-amino-acid chain: Serine/threonine transporter SstT (408 aa).

9 helical membrane passes run 11 to 31 (LANG…VILA), 43 to 63 (FLGS…VFIL), 81 to 101 (PIVV…VVLS), 141 to 161 (ALMT…GLAL), 192 to 212 (IGIF…AIAG), 216 to 236 (LLAV…PLIV), 298 to 318 (MGGA…TLGI), 330 to 350 (VVAA…LLLI), and 357 to 377 (FGIS…IGVI).

The protein belongs to the dicarboxylate/amino acid:cation symporter (DAACS) (TC 2.A.23) family.

The protein resides in the cell inner membrane. It catalyses the reaction L-serine(in) + Na(+)(in) = L-serine(out) + Na(+)(out). It carries out the reaction L-threonine(in) + Na(+)(in) = L-threonine(out) + Na(+)(out). In terms of biological role, involved in the import of serine and threonine into the cell, with the concomitant import of sodium (symport system). In Shewanella sp. (strain W3-18-1), this protein is Serine/threonine transporter SstT.